A 475-amino-acid chain; its full sequence is Ankyrin repeat, SAM and basic leucine zipper domain-containing protein 1 (475 aa).

The span at 1-10 (MAAGRLRGLA) shows a compositional bias: low complexity. The tract at residues 1–24 (MAAGRLRGLAVAGGGESSESDDDG) is disordered. Phosphoserine occurs at positions 17, 18, and 20. ANK repeat units lie at residues 45–74 (EKNE…SVDS), 78–107 (YGWT…NANF), 110–144 (DKQT…DPNV), 148–177 (RLMT…EVNT), 181–210 (SGYT…DKML), and 214–243 (DGNI…PLKG). The region spanning 272 to 334 (SYTAFGDLEV…KILAALKELD (63 aa)) is the SAM domain.

Interacts with DDX4, PIWIL1, RANBP9 and TDRD1.

The protein localises to the cytoplasm. Its function is as follows. Plays a central role during spermatogenesis by repressing transposable elements and preventing their mobilization, which is essential for the germline integrity. Acts via the piRNA metabolic process, which mediates the repression of transposable elements during meiosis by forming complexes composed of piRNAs and Piwi proteins and governs the methylation and subsequent repression of transposons. Its association with pi-bodies suggests a participation in the primary piRNAs metabolic process. Required prior to the pachytene stage to facilitate the production of multiple types of piRNAs, including those associated with repeats involved in the regulation of retrotransposons. May act by mediating protein-protein interactions during germ cell maturation. This is Ankyrin repeat, SAM and basic leucine zipper domain-containing protein 1 (ASZ1) from Carollia perspicillata (Seba's short-tailed bat).